The chain runs to 366 residues: Sperm equatorial segment protein 1 (366 aa).

An N-terminal signal peptide occupies residues 1-18 (MKFLVLLVALLLWPSSLP). Residue Asn-129 is glycosylated (N-linked (GlcNAc...) asparagine). Positions 139–204 (PFIEKDEPEP…EDVPQLSGDN (66 aa)) are disordered. Positions 144-157 (DEPEPEPEPEPEPE) are enriched in acidic residues. A compositionally biased stretch (polar residues) spans 165-189 (APTQVPSVTEPSQDVTSLSGSTDLG).

The protein belongs to the SPESP1 family. Post-translationally, glycosylated. In testis there are two predominant forms of 77- and 67-kDa and a form of 47-kDa, whereas in epididymal sperm from caput, corpus, and cauda there are two forms of 47- and 43-kDa. Testis forms contain complex carbohydrate residues. Epididymal sperm forms are N-glycosylated. Then undergoes significant glycosylation in the testis and that the majority of these glycoconjugates are removed by the time sperm reach the caput epididymis.

The protein resides in the cytoplasmic vesicle. The protein localises to the secretory vesicle. It localises to the acrosome. Functionally, involved in fertilization ability of sperm. This Bos taurus (Bovine) protein is Sperm equatorial segment protein 1.